The following is a 396-amino-acid chain: Acetylornithine aminotransferase 2 (396 aa).

Pyridoxal 5'-phosphate contacts are provided by residues 102–103 and Phe-134; that span reads GA. Arg-137 is a N(2)-acetyl-L-ornithine binding site. 219-222 is a pyridoxal 5'-phosphate binding site; it reads DEVQ. Position 248 is an N6-(pyridoxal phosphate)lysine (Lys-248). Position 276 (Thr-276) interacts with pyridoxal 5'-phosphate.

Belongs to the class-III pyridoxal-phosphate-dependent aminotransferase family. ArgD subfamily. In terms of assembly, homodimer. It depends on pyridoxal 5'-phosphate as a cofactor.

Its subcellular location is the cytoplasm. It carries out the reaction N(2)-acetyl-L-ornithine + 2-oxoglutarate = N-acetyl-L-glutamate 5-semialdehyde + L-glutamate. Its pathway is amino-acid biosynthesis; L-arginine biosynthesis; N(2)-acetyl-L-ornithine from L-glutamate: step 4/4. In Bordetella bronchiseptica (strain ATCC BAA-588 / NCTC 13252 / RB50) (Alcaligenes bronchisepticus), this protein is Acetylornithine aminotransferase 2.